Consider the following 3302-residue polypeptide: MARYQAAVSRGDTRSFSANVMEESDLCTVPGGLAKMKRQFEKDEMTSTCNAFSEYQYQHESRSEQEAIHNRQEIRRNEEEVSKGHRTDVFKAEMMSHLEKHTEETNQASQFRQYVQETVIDTPEDEEIPKVSTKILKEQFEKTAQENFLYSDKETTTPAKCIKIENDSEETLKPSSAMGTSSYTSARQSKETSTSSYSNHSLTSTILAQEKGTPSGKMEEFPPPPPDVFQTPMDVTAFSQSPEFPSPPRRLPMPRDVYSKQRNLYELNRLYRHIHPELRKNLEKDYISEVSEIVSSHINSGNSISAGVQQARYVFENTNDSSQKDLSSERENLEWDEILKGEVQSIRWIFENQPLDSINQGFTDEAYTSKGIADQELIAGGDVKYTTWMFETQPIDALGVPSAGTEENTEKIPELAKGDVCTARWMFETRPLDSMNKMHEWEDETASTFIKDITGGDVKTVRYMFETQQLDQLGQLHSVDEMNLLQLRSELKEIKGNVKRSIKCFETQPLYVIRDGSGQMLEIKTVQREDIEKGDVRTARWMFETQPLDTIKQDITEIKVVRGISMEENVKGEVGRARWLFETQPLEKIKEESGEAVLKTEAVVGIDVSKKCWMFETQPLDTLKQSPDTESVSPEERIGGDVKTTKHLLETLPIEALKDSPDVGKLQKITASEEEKGDVKHQKWVFETQRLEDIREDKKEYTQTVKLEAVDRGHVKNYTHIFESNNLIKVDASHQIEVEGVTRGTVELNKSLFETTPLYAIQDHLGKYHQVKTVQQEEIVRGDVRSCRWLFETRPIDQFDESLHKFQIIRGISAQEIQAGNVKSARWLFETQPLDSIKYFSNVEETDSKTEQSTDIVKGDVKTCKWLFETQPMESLYEKASLMTNSEDIHKGDVRTCMWLFETQPLDAIKNDSEATVKLQTVKQEEIQGGDVRTACLLFETENLDNIQGGEGKETKPVEMDIESGDVSGMKYKFENQSLDSISCSSENVLNKIKTLKIEDIQKGNVLNCRWLFENQPIDMIKENQEGDGLVKTVTDIQGGDVRKGCFIFETFSLDEIKDESDVISTRQTNTEEVIKGDVKSYKMLFETQPLYAIQDQEGFYHEVTTVKKEETIHGDVRGTRWLFETKPLDSINASEDVYIIKSVTQEDIQKGDVSSVRYRFETQPLDMISDKSHNIMPTIDHIQGGNVQMNKQLFESEGGDKKNYVRTVSINEIQKGNVKTSTWLFETHSIDELGEVSTYENIKTVTQEDVQKGDVKQAVWLFENQTLDSIKELDESDTKITKEEIPPSDVKTTTWLFETTPIHEFNETRIEKEEIIGKSIKETLEDLYSQRVVEAPGIIIEADEVGDVRMAKYKLMNQRTPEIQKEEVIRADLGNIMMNLLSQRDCTKKEIFISEEEKGNVNFTKTQLLNRSMEFHAEKEEIVRGDVKQAIQKLFSEERCAKRGILIQEDEKGDVNMTIYCLLHENAGDKTKREDILGGDVRRTIHNLLSSASNDKISERTKIDASERGNVQFFTTCIETGALDYLKQLQTGSNETLTARKQEGEEEIIGGDVEGTKFLLKKRQSSIERTVSETDIIPGDVRNTVKVFMTEPQSASFKTAKEEIVKGDLKSTLNSLNQAMNQKVVAKTEDIMKDDKAAILKSLKESGGRQKEHKQSASISSDIGQAIECLEKATNTRTEILKKELILDDLKTSLRSLKEEQYSFKEVGKQGMVKDVLGFSERQELGIHPAAVQREKKSLLQPVPGPCEPAIRQQAGPGPLDEATQKSCHRSLTEERTEANLPKAPKGTVKIVIDREQNNDALEKSLRKMSNSEHRAMKNVLDMGDRRGVWTESKECLCSDDHMSKYVSASMSRKKSLKTKESENVRESKDDVSSTQSVDKTFRKQQTQNCELGKDHQKSQFQDSYAKNQKNTQNISMSAETQSYRPDPTQHPVSNPAGETLEMTRDFQKQALIRQEKQNSNKDMRKNDMGLQPLPVGKDAHSAPGVTVSGKNHKRTQAPDKKQRIDVCLESQDFLMKTNTSKELKMAMERSFNPVNLYPDCGVKENEDALPPPSPPPPPPSNASSEIEFPLPPPPPIMLLPEKNEFPPSSPTEKSRAELESLPTLPLPPPPGDEKSDQECLPTSLPPPPPTAPSQPAHLLSSSVLEHHSEAFLQQYSRKETLDSHQLHSQAKILTGKSPPPTLPKPKLPERIKAKMSQDSPSGELERSLSDVEIKTTLSKDQKSSLVAESREHTEAKQEVFRKSLGRKQLSISSANSLSQTVPEIPAPKEKQTAPLVKSHSFPSGSEQQSPKPYMRKFKTPLMIAEEKYRQQREELEKQRRESSCHSIIKTETQHRSLSEKEKETELQKAAEAMSTPRKDSDFTRAQPNLEPKSKAVIASECSESQLSTASALTVATERLQHVLAASDDKLTLRREGTQNSSDTLQSKTACEINQSHKECRTEQTFEQHVEKLPFPQTKPISPSFKVKTIRLPALDHTLTETDLSSERRVKQSEIDVQTSTKEMNKEIKKTEVSTQCDNKQSVAEKYFQLPKTEKRVTVQMPKDYAAKSHQSKLQTVPKKHGGLGEFDRGNVLGREGKNQDSSMSSTKESRVIVERKQEHLQDQSVPRLVQQKIIGESLDSRVQNFQQTQTQTSRIEHKELSQPYSEKKCLRDKDKQQKQVSSNTDDSKQEITQKQSSFSSVRESQQDGEKCAINILEFLRKREELQQILSRVKQFEADSNKSGLKTFQTLLNIAPVWLISEEKREYGVRVAMENNLEKVKEEIIHIKTQAEEMLVHCEHVIRTAMMASQTGKQKDKPTNLNEMPLKVSNVNLSSHKGTEQKESKIVEEKLASRQVATHSEAATHNPAKTYQEAKGDDSKMAPPSLKTRPPSPTFITIESTARRAETSTKSELSQSPKNNSCVEPLPRRPMEHTSRLPRTSTSPSPPRSRSEQLVRLKDTTARLAKGTIPCSPGTPVPVVEKRSEVVMSPATLRRQIKIESRGGDSPPTITIPVSVNHHVVSGSFRESVDAQEAVKKTEKTETYVHKDKKNSVSSAMPETESYDAVEIIRKVEGPHLSEHRERFEATNQTVQMAEHFLNGHENEVNRWFREFENGPVFGAKTERRAYANGEINHNMKQESHTFCKEEFGLESSETANFTGFSYRHPREHRAKAPATQPRVHSEARALNEHFLSVDAFDSQIVESQVATSSSRSSEAGRSGFDFKHAPPTYEDVIAGHILDIADSPTNLRRNFQKTWQESERVFKSVGYETSDAHATEMSRAFQEELAFLSETVGPRQGNLHNLSKDGLSNGVPRSRPAEFS.

The disordered stretch occupies residues 166 to 204 (NDSEETLKPSSAMGTSSYTSARQSKETSTSSYSNHSLTS). Over residues 173–187 (KPSSAMGTSSYTSAR) the composition is skewed to polar residues. A compositionally biased stretch (low complexity) spans 191–204 (ETSTSSYSNHSLTS). Xin repeat units follow at residues 306 to 321 (AGVQ…TNDS), 341 to 356 (GEVQ…QPLD), 381 to 396 (GDVK…QPID), 418 to 433 (GDVC…RPLD), 456 to 471 (GDVK…QQLD), 496 to 511 (GNVK…QPLY), and 534 to 549 (GDVR…QPLD). Ser565 is subject to Phosphoserine. Xin repeat units follow at residues 572-587 (GEVG…QPLE) and 606-621 (IDVS…QPLD). The residue at position 633 (Ser633) is a Phosphoserine. Xin repeat units follow at residues 640–655 (GDVK…LPIE), 677–692 (GDVK…QRLE), 713–728 (GHVK…NNLI), 744–759 (GTVE…TPLY), and 782–797 (GDVR…RPID). Ser813 is subject to Phosphoserine. Xin repeat units follow at residues 820–835 (GNVK…QPLD), 859–874 (GDVK…QPME), 892–907 (GDVR…QPLD), 930–945 (GDVR…ENLD), 965–980 (GDVS…QSLD), 1004–1019 (GNVL…QPID), 1040–1055 (GDVR…FSLD), 1077–1092 (GDVK…QPLY), 1115–1130 (GDVR…KPLD), 1152–1167 (GDVS…QPLD), and 1186–1201 (GNVQ…EGGD). Ser1210 carries the phosphoserine modification. 3 Xin repeats span residues 1217 to 1232 (GNVK…HSID), 1254 to 1269 (GDVK…QTLD), and 1289 to 1304 (SDVK…TPIH). Phosphoserine is present on Ser1573. Disordered stretches follow at residues 1848–1882 (VSAS…VDKT), 1920–1939 (AETQ…NPAG), 1957–2002 (EKQN…APDK), 2039–2296 (YPDC…KPYM), 2311–2378 (RQQR…SKAV), 2546–2593 (YAAK…ESRV), and 2626–2687 (NFQQ…RESQ). Residues 1859 to 1873 (KTKESENVRESKDDV) are compositionally biased toward basic and acidic residues. Residue Thr1930 is modified to Phosphothreonine. Ser1935 is modified (phosphoserine). Over residues 1957–1969 (EKQNSNKDMRKND) the composition is skewed to basic and acidic residues. Composition is skewed to pro residues over residues 2051 to 2062 (LPPPSPPPPPPS) and 2125 to 2134 (SLPPPPPTAP). The segment covering 2135-2145 (SQPAHLLSSSV) has biased composition (low complexity). Ser2158 is subject to Phosphoserine. The span at 2158–2167 (SRKETLDSHQ) shows a compositional bias: basic and acidic residues. An interacts with NEBL region spans residues 2181 to 2186 (PPTLPK). Ser2198, Ser2211, and Ser2252 each carry phosphoserine. The segment covering 2205-2243 (ELERSLSDVEIKTTLSKDQKSSLVAESREHTEAKQEVFR) has biased composition (basic and acidic residues). Composition is skewed to polar residues over residues 2251–2263 (LSIS…SQTV) and 2282–2292 (SFPSGSEQQSP). Residues 2303-2328 (LMIAEEKYRQQREELEKQRRESSCHS) adopt a coiled-coil conformation. 2 stretches are compositionally biased toward basic and acidic residues: residues 2311 to 2325 (RQQR…RESS) and 2333 to 2350 (ETQH…ELQK). Residues 2626–2635 (NFQQTQTQTS) are compositionally biased toward polar residues. The span at 2636–2659 (RIEHKELSQPYSEKKCLRDKDKQQ) shows a compositional bias: basic and acidic residues. A compositionally biased stretch (polar residues) spans 2674–2685 (TQKQSSFSSVRE). 2 coiled-coil regions span residues 2696–2724 (NILE…SNKS) and 2751–2777 (RVAM…EMLV). Positions 2835–2934 (RQVATHSEAA…PSPPRSRSEQ (100 aa)) are disordered. Composition is skewed to polar residues over residues 2836-2850 (QVAT…NPAK) and 2891-2903 (KSEL…NNSC). Over residues 2907 to 2916 (LPRRPMEHTS) the composition is skewed to basic and acidic residues. Residues Ser2987 and Ser3225 each carry the phosphoserine modification. The interval 3278-3302 (QGNLHNLSKDGLSNGVPRSRPAEFS) is disordered.

This sequence belongs to the Xin family. In terms of assembly, interacts with ACTN2. Interacts with F-actin. Interacts with NEBL (via SH3 domain). Interacts with Kcna5/Kv1.5 and Scn5a/Nav1.5; the interactions are required for normal action potential configuration in the heart.

The protein resides in the cell junction. In terms of biological role, protects actin filaments from depolymerization. Required for correct morphology of cell membranes and maturation of intercalated disks of cardiomyocytes via facilitating localization of XIRP1 and CDH2 to the termini of aligned mature cardiomyocytes. Thereby required for correct postnatal heart development and growth regulation that is crucial for overall heart morphology and diastolic function. Required for normal electrical conduction in the heart including formation of the infranodal ventricular conduction system and normal action potential configuration, as a result of its interaction with the cardiac ion channel components Scn5a/Nav1.5 and Kcna5/Kv1.5. Required for regular actin filament spacing of the paracrystalline array in both inner and outer hair cells of the cochlea, thereby required for maintenance of stereocilia morphology. The protein is Xin actin-binding repeat-containing protein 2 of Rattus norvegicus (Rat).